Consider the following 476-residue polypeptide: Glutamate--tRNA ligase 1 (476 aa).

The 'HIGH' region motif lies at 9-19 (PSPTGFLHIGG). The short motif at 238-242 (KLSKR) is the 'KMSKS' region element. Lys-241 is a binding site for ATP.

Belongs to the class-I aminoacyl-tRNA synthetase family. Glutamate--tRNA ligase type 1 subfamily. In terms of assembly, monomer.

The protein resides in the cytoplasm. It carries out the reaction tRNA(Glu) + L-glutamate + ATP = L-glutamyl-tRNA(Glu) + AMP + diphosphate. Its function is as follows. Catalyzes the attachment of glutamate to tRNA(Glu) in a two-step reaction: glutamate is first activated by ATP to form Glu-AMP and then transferred to the acceptor end of tRNA(Glu). This Bartonella bacilliformis (strain ATCC 35685 / KC583 / Herrer 020/F12,63) protein is Glutamate--tRNA ligase 1.